The chain runs to 133 residues: Large-conductance mechanosensitive channel (133 aa).

The next 2 membrane-spanning stretches (helical) occupy residues 17–37 (AFIL…GGAF) and 73–93 (IGSF…LYLA).

Belongs to the MscL family. In terms of assembly, homopentamer.

The protein resides in the cell inner membrane. Channel that opens in response to stretch forces in the membrane lipid bilayer. May participate in the regulation of osmotic pressure changes within the cell. In Synechococcus elongatus (strain ATCC 33912 / PCC 7942 / FACHB-805) (Anacystis nidulans R2), this protein is Large-conductance mechanosensitive channel.